Reading from the N-terminus, the 502-residue chain is Pentatricopeptide repeat-containing protein At4g01990, mitochondrial (502 aa).

Residues 1-13 (MMHSVSRLARRFC) constitute a mitochondrion transit peptide. 7 PPR repeats span residues 139–173 (NQST…NHVS), 174–208 (NSLP…SITP), 209–243 (CDIT…GEGI), 245–275 (SWNT…LENN), 280–310 (VRDC…LKKR), 315–345 (NNSS…WEST), and 350–381 (DMRM…MKKC).

This sequence belongs to the PPR family. P subfamily.

The protein localises to the mitochondrion. The protein is Pentatricopeptide repeat-containing protein At4g01990, mitochondrial of Arabidopsis thaliana (Mouse-ear cress).